Here is a 334-residue protein sequence, read N- to C-terminus: Geranylgeranyl pyrophosphate synthase ltmG (334 aa).

Isopentenyl diphosphate-binding residues include lysine 53, arginine 56, and histidine 85. The Mg(2+) site is built by aspartate 92 and aspartate 96. Arginine 101 is a dimethylallyl diphosphate binding site. Arginine 102 provides a ligand contact to isopentenyl diphosphate. The dimethylallyl diphosphate site is built by lysine 179, threonine 180, and glutamine 213. A Mg(2+)-binding site is contributed by aspartate 216. 3 residues coordinate dimethylallyl diphosphate: asparagine 220, lysine 230, and lysine 240.

This sequence belongs to the FPP/GGPP synthase family. Mg(2+) serves as cofactor.

The enzyme catalyses isopentenyl diphosphate + dimethylallyl diphosphate = (2E)-geranyl diphosphate + diphosphate. It catalyses the reaction isopentenyl diphosphate + (2E)-geranyl diphosphate = (2E,6E)-farnesyl diphosphate + diphosphate. The catalysed reaction is isopentenyl diphosphate + (2E,6E)-farnesyl diphosphate = (2E,6E,10E)-geranylgeranyl diphosphate + diphosphate. It functions in the pathway secondary metabolite biosynthesis. Geranylgeranyl pyrophosphate synthase; part of the gene cluster that mediates the biosynthesis of lolitrems, indole-diterpene mycotoxins that are potent tremorgens in mammals, and are synthesized by clavicipitaceous fungal endophytes in association with their grass hosts. The geranylgeranyl diphosphate (GGPP) synthase ltmG is proposed to catalyze the first step in lolitrem biosynthesis. LtmG catalyzes a series of iterative condensations of isopentenyl diphosphate (IPP) with dimethylallyl diphosphate (DMAPP), geranyl diphosphate (GPP), and farnesyl diphosphate (FPP), to form GGPP. GGPP then condenses with indole-3-glycerol phosphate to form 3-geranylgeranylindole, an acyclic intermediate, to be incorporated into paxilline. Either ltmG or ltmC could be responsible for this step, as both are putative prenyl transferases. The FAD-dependent monooxygenase ltmM then catalyzes the epoxidation of the two terminal alkenes of the geranylgeranyl moiety, which is subsequently cyclized by ltmB, to paspaline. The cytochrome P450 monooxygenases ltmQ and ltmP can sequentially oxidize paspaline to terpendole E and terpendole F. Alternatively, ltmP converts paspaline to an intermediate which is oxidized by ltmQ to terpendole F. LtmF, ltmK, ltmE and ltmJ appear to be unique to the epichloe endophytes. The prenyltransferase ltmF is involved in the 27-hydroxyl-O-prenylation. The cytochrome P450 monooxygenase ltmK is required for the oxidative acetal ring formation. The multi-functional prenyltransferase ltmE is required for C20- and C21-prenylations of the indole ring of paspalanes and acts together with the cytochrome P450 monooxygenase ltmJ to yield lolitremanes by multiple oxidations and ring closures. The stereoisomer pairs of lolitriol and lolitrem N or lolitrem B and lolitrem F may be attributed to variations in the way in which ring closure can occur under the action of ltmJ. While the major product of this pathway is lolitrem B, the prenyl transferases and cytochrome P450 monooxygenases identified in this pathway have a remarkable versatility in their regio- and stereo-specificities to generate a diverse range of metabolites that are products of a metabolic grid rather than a linear pathway. The polypeptide is Geranylgeranyl pyrophosphate synthase ltmG (Epichloe festucae (strain Fl1)).